Reading from the N-terminus, the 330-residue chain is Phosphate acyltransferase (330 aa).

The protein belongs to the PlsX family. As to quaternary structure, homodimer. Probably interacts with PlsY.

It localises to the cytoplasm. It catalyses the reaction a fatty acyl-[ACP] + phosphate = an acyl phosphate + holo-[ACP]. Its pathway is lipid metabolism; phospholipid metabolism. Its function is as follows. Catalyzes the reversible formation of acyl-phosphate (acyl-PO(4)) from acyl-[acyl-carrier-protein] (acyl-ACP). This enzyme utilizes acyl-ACP as fatty acyl donor, but not acyl-CoA. The protein is Phosphate acyltransferase of Bacillus mycoides (strain KBAB4) (Bacillus weihenstephanensis).